A 678-amino-acid chain; its full sequence is Glycine--tRNA ligase beta subunit (678 aa).

Belongs to the class-II aminoacyl-tRNA synthetase family. Tetramer of two alpha and two beta subunits.

It is found in the cytoplasm. It catalyses the reaction tRNA(Gly) + glycine + ATP = glycyl-tRNA(Gly) + AMP + diphosphate. The polypeptide is Glycine--tRNA ligase beta subunit (Streptococcus pneumoniae (strain ATCC BAA-255 / R6)).